The primary structure comprises 300 residues: Cation-efflux pump FieF (300 aa).

4 helical membrane-spanning segments follow: residues A12–W32, I39–V59, A82–I102, and P114–F134. Zn(2+) is bound by residues D45 and D49. Residues H153 and D157 each contribute to the Zn(2+) site. The next 2 helical transmembrane spans lie at S156–H176 and F182–I202.

It belongs to the cation diffusion facilitator (CDF) transporter (TC 2.A.4) family. FieF subfamily. Homodimer.

Its subcellular location is the cell inner membrane. It catalyses the reaction Zn(2+)(in) + H(+)(out) = Zn(2+)(out) + H(+)(in). The catalysed reaction is Cd(2+)(in) + H(+)(out) = Cd(2+)(out) + H(+)(in). The enzyme catalyses Fe(2+)(in) + H(+)(out) = Fe(2+)(out) + H(+)(in). Divalent metal cation transporter which exports Zn(2+), Cd(2+) and possibly Fe(2+). May be involved in zinc and iron detoxification by efflux. This Cronobacter sakazakii (strain ATCC BAA-894) (Enterobacter sakazakii) protein is Cation-efflux pump FieF.